Consider the following 200-residue polypeptide: MVIRRLYQFCASHVVRNCSSLKCAQNIHGHNYEVEVFIETNRLDNANMALDFGLMQQEMQVFIESFDHAHHFWDKESLEFQRFIENHCVRYVKCSFNLSAESYALMFLYYLTKILQKSVFSNDEGELKVSSVRVHETKNGYAESFLKDLENPHFKSLVHDHCVSFSQGIQNLWHDKDFFNKIISDEKQCFFHAKPLHQIP.

Histidine 13 is a Zn(2+) binding site. The active-site Proton acceptor is the cysteine 23. Histidine 28 and histidine 30 together coordinate Zn(2+). Residues histidine 68 and glutamate 136 each act as charge relay system in the active site.

This sequence belongs to the PTPS family. QueD subfamily. The cofactor is Zn(2+).

It carries out the reaction 7,8-dihydroneopterin 3'-triphosphate + H2O = 6-carboxy-5,6,7,8-tetrahydropterin + triphosphate + acetaldehyde + 2 H(+). It functions in the pathway purine metabolism; 7-cyano-7-deazaguanine biosynthesis. Its function is as follows. Catalyzes the conversion of 7,8-dihydroneopterin triphosphate (H2NTP) to 6-carboxy-5,6,7,8-tetrahydropterin (CPH4) and acetaldehyde. The chain is 6-carboxy-5,6,7,8-tetrahydropterin synthase (queD) from Helicobacter pylori (strain ATCC 700392 / 26695) (Campylobacter pylori).